The primary structure comprises 295 residues: Pyridoxal 5'-phosphate synthase subunit PdxS (295 aa).

Residue Asp-25 coordinates D-ribose 5-phosphate. Lys-82 functions as the Schiff-base intermediate with D-ribose 5-phosphate in the catalytic mechanism. Gly-154 provides a ligand contact to D-ribose 5-phosphate. Residue Arg-166 participates in D-glyceraldehyde 3-phosphate binding. D-ribose 5-phosphate is bound by residues Gly-215 and 236-237 (GS).

This sequence belongs to the PdxS/SNZ family. In terms of assembly, in the presence of PdxT, forms a dodecamer of heterodimers.

The enzyme catalyses aldehydo-D-ribose 5-phosphate + D-glyceraldehyde 3-phosphate + L-glutamine = pyridoxal 5'-phosphate + L-glutamate + phosphate + 3 H2O + H(+). It participates in cofactor biosynthesis; pyridoxal 5'-phosphate biosynthesis. In terms of biological role, catalyzes the formation of pyridoxal 5'-phosphate from ribose 5-phosphate (RBP), glyceraldehyde 3-phosphate (G3P) and ammonia. The ammonia is provided by the PdxT subunit. Can also use ribulose 5-phosphate and dihydroxyacetone phosphate as substrates, resulting from enzyme-catalyzed isomerization of RBP and G3P, respectively. In Listeria welshimeri serovar 6b (strain ATCC 35897 / DSM 20650 / CCUG 15529 / CIP 8149 / NCTC 11857 / SLCC 5334 / V8), this protein is Pyridoxal 5'-phosphate synthase subunit PdxS.